Here is a 390-residue protein sequence, read N- to C-terminus: Ammonium/H(+) antiporter subunit AmhT (390 aa).

The next 10 helical transmembrane spans lie at Val-2 to Val-22, Val-31 to Leu-51, His-52 to Leu-72, Phe-94 to Ile-114, Phe-143 to Val-163, Leu-178 to Phe-198, Asp-212 to Leu-232, Leu-266 to Pro-286, Ile-288 to Leu-308, and Val-351 to Ala-371.

Belongs to the monovalent cation:proton antiporter 2 (CPA2) transporter (TC 2.A.37) family. As to quaternary structure, interacts with AmhM.

The protein resides in the cell membrane. With respect to regulation, amhT alone exhibits antiport activity, but interaction with AmhM confers different properties, such as higher KM for potassium. Functionally, ammonium/proton antiporter that mediates the efflux of ammonium ions. Can also transport potassium or rubidium, but not sodium or lithium. The sequence is that of Ammonium/H(+) antiporter subunit AmhT (amhT) from Alkalihalophilus pseudofirmus (strain ATCC BAA-2126 / JCM 17055 / OF4) (Bacillus pseudofirmus).